The following is a 260-amino-acid chain: Proteasome subunit alpha type-1 (260 aa).

The tract at residues 240 to 260 (PRTTGGAAAAAAPGGAEPMQM) is disordered. Over residues 244–260 (GGAAAAAAPGGAEPMQM) the composition is skewed to low complexity.

Belongs to the peptidase T1A family. As to quaternary structure, the 26S proteasome consists of a 20S proteasome core and two 19S regulatory subunits. The 20S proteasome core is composed of 28 subunits that are arranged in four stacked rings, resulting in a barrel-shaped structure. The two end rings are each formed by seven alpha subunits, and the two central rings are each formed by seven beta subunits. The catalytic chamber with the active sites is on the inside of the barrel.

Its subcellular location is the cytoplasm. The protein resides in the nucleus. Functionally, the proteasome is a multicatalytic proteinase complex which is characterized by its ability to cleave peptides with Arg, Phe, Tyr, Leu, and Glu adjacent to the leaving group at neutral or slightly basic pH. The proteasome has an ATP-dependent proteolytic activity. The chain is Proteasome subunit alpha type-1 (pas-6) from Caenorhabditis elegans.